Reading from the N-terminus, the 227-residue chain is NAD(P)H-quinone oxidoreductase subunit K, chloroplastic (227 aa).

C43, C44, C108, and C139 together coordinate [4Fe-4S] cluster.

The protein belongs to the complex I 20 kDa subunit family. As to quaternary structure, NDH is composed of at least 16 different subunits, 5 of which are encoded in the nucleus. The cofactor is [4Fe-4S] cluster.

Its subcellular location is the plastid. The protein localises to the chloroplast thylakoid membrane. It carries out the reaction a plastoquinone + NADH + (n+1) H(+)(in) = a plastoquinol + NAD(+) + n H(+)(out). The enzyme catalyses a plastoquinone + NADPH + (n+1) H(+)(in) = a plastoquinol + NADP(+) + n H(+)(out). Functionally, NDH shuttles electrons from NAD(P)H:plastoquinone, via FMN and iron-sulfur (Fe-S) centers, to quinones in the photosynthetic chain and possibly in a chloroplast respiratory chain. The immediate electron acceptor for the enzyme in this species is believed to be plastoquinone. Couples the redox reaction to proton translocation, and thus conserves the redox energy in a proton gradient. The protein is NAD(P)H-quinone oxidoreductase subunit K, chloroplastic of Pelargonium hortorum (Common geranium).